Consider the following 126-residue polypeptide: FCS-Like Zinc finger 7 (126 aa).

An FLZ-type zinc finger spans residues 72–116; it reads SFLVNCGFCKRGLAPGRDIYMYKGDAAFCSIECREQQMEHDEGKT.

This sequence belongs to the FLZ family. As to quaternary structure, interacts with KIN10 and KIN11 via its FLZ-type zinc finger domain. Interacts with KINB3 via its N-terminal part. Forms homodimer and heterodimer with FLZ1, FLZ2 and FLZ15 in vitro.

The protein localises to the cytoplasm. It localises to the nucleus. May act as an adapter to facilitate the interaction of SnRK1 complex with effector proteins, conferring tissue- and stimulus-type specific differences in the SnRK1 regulation pathway. In Arabidopsis thaliana (Mouse-ear cress), this protein is FCS-Like Zinc finger 7.